We begin with the raw amino-acid sequence, 351 residues long: Biotin synthase (351 aa).

The 218-residue stretch at 48–265 folds into the Radical SAM core domain; the sequence is NKVRIHILDN…LCMFRLINPD (218 aa). [4Fe-4S] cluster is bound by residues C63, C67, and C70. [2Fe-2S] cluster-binding residues include C107, C139, C199, and R269.

Belongs to the radical SAM superfamily. Biotin synthase family. In terms of assembly, homodimer. It depends on [4Fe-4S] cluster as a cofactor. Requires [2Fe-2S] cluster as cofactor.

The catalysed reaction is (4R,5S)-dethiobiotin + (sulfur carrier)-SH + 2 reduced [2Fe-2S]-[ferredoxin] + 2 S-adenosyl-L-methionine = (sulfur carrier)-H + biotin + 2 5'-deoxyadenosine + 2 L-methionine + 2 oxidized [2Fe-2S]-[ferredoxin]. It participates in cofactor biosynthesis; biotin biosynthesis; biotin from 7,8-diaminononanoate: step 2/2. Its function is as follows. Catalyzes the conversion of dethiobiotin (DTB) to biotin by the insertion of a sulfur atom into dethiobiotin via a radical-based mechanism. The sequence is that of Biotin synthase from Leptospira interrogans serogroup Icterohaemorrhagiae serovar Lai (strain 56601).